The following is a 263-amino-acid chain: Lens fiber major intrinsic protein (263 aa).

At 1 to 9 (MWELRSASF) the chain is on the cytoplasmic side. The chain crosses the membrane as a helical span at residues 10–29 (WRAIFAEFFATLFYVFFGLG). At 30–41 (ASLRWAPGPLHV) the chain is on the extracellular side. The chain crosses the membrane as a helical span at residues 42–59 (LQVALAFGLALATLVQAV). Residues 60–61 (GH) are Cytoplasmic-facing. An intramembrane region (discontinuously helical) is located at residues 62–77 (ISGAHVNPAVTFAFLV). An NPA 1 motif is present at residues 68-70 (NPA). Residues 78-82 (GSQMS) lie on the Cytoplasmic side of the membrane. The helical transmembrane segment at 83 to 106 (LLRAICYMAAQLLGAVAGAAVLYS) threads the bilayer. Over 107–127 (VTPAAVRGNLALNTLHPGVSL) the chain is Extracellular. A helical membrane pass occupies residues 128-148 (GQATTVEIFLTLQFVLCIFAT). Over 149–156 (YDERRNGR) the chain is Cytoplasmic. A helical membrane pass occupies residues 157–175 (LGSVALAVGFSLTLGHLFG). Residues 176-178 (MYY) lie on the Extracellular side of the membrane. An intramembrane region (discontinuously helical) is located at residues 179-193 (TGAGMNPARSFAPAI). The short motif at 184–186 (NPA) is the NPA 2 element. Topologically, residues 194 to 200 (LTRNFTN) are extracellular. The chain crosses the membrane as a helical span at residues 201–222 (HWVYWVGPIIGGGLASLLYDFL). At 223–263 (LFPRLKSVSERLSILKGARPSDSNGQPEGTGEPVELKTQAL) the chain is on the cytoplasmic side. The tract at residues 227–237 (LKSVSERLSIL) is interaction with CALM. Phosphoserine occurs at positions 235, 243, and 245. The disordered stretch occupies residues 240-263 (ARPSDSNGQPEGTGEPVELKTQAL). N246 carries the post-translational modification Deamidated asparagine.

The protein belongs to the MIP/aquaporin (TC 1.A.8) family. Homotetramer; each monomer provides an independent water pore. Two homotetramers on opposing membranes can dimerize, forming a cell-cell junction. Interacts with CALM; the calcium-calmodulin/CALM complex interacts with the cytoplasmic domains of two aquaporins, leading to channel closure. Interacts with BFSP1 (via C-terminus); prevents calcium-dependent inhibition of the water channel activity. Post-translationally, subject to partial proteolytic cleavage in the eye lens core. Partial proteolysis promotes interactions between tetramers from adjoining membranes. In terms of processing, fatty acylated at Met-1 and Lys-238. The acyl modifications, in decreasing order of ion abundance, are: oleoyl (C18:1) &gt; palmitoyl (C16:0) &gt; stearoyl (C18:0) &gt; eicosenoyl (C20:1) &gt; dihomo-gamma-linolenoyl (C20:3) &gt; palmitoleoyl (C16:1) &gt; eicosadienoyl (C20:2).

The protein localises to the cell membrane. Its subcellular location is the cell junction. It catalyses the reaction H2O(in) = H2O(out). With respect to regulation, the water channel activity is inhibited by calcium through calmodulin/CALM. In terms of biological role, aquaporins form homotetrameric transmembrane channels, with each monomer independently mediating water transport across the plasma membrane along its osmotic gradient. Specifically expressed in lens fiber cells, this aquaporin is crucial for maintaining lens water homeostasis and transparency. Beyond water permeability, it also acts as a cell-to-cell adhesion molecule, forming thin junctions between lens fiber cells that are essential for maintaining the ordered structure and transparency of the lens. In Oryctolagus cuniculus (Rabbit), this protein is Lens fiber major intrinsic protein.